The following is a 103-amino-acid chain: UPF0145 protein BT9727_3206 (103 aa).

Belongs to the UPF0145 family.

The polypeptide is UPF0145 protein BT9727_3206 (Bacillus thuringiensis subsp. konkukian (strain 97-27)).